The chain runs to 890 residues: DNA mismatch repair protein MutS (890 aa).

607–614 contacts ATP; it reads GPNMSGKS. The segment at 832–851 is disordered; it reads ESQLSFFGTEQSSKKQDKPV.

It belongs to the DNA mismatch repair MutS family.

Functionally, this protein is involved in the repair of mismatches in DNA. It is possible that it carries out the mismatch recognition step. This protein has a weak ATPase activity. In Bacillus cereus (strain 03BB102), this protein is DNA mismatch repair protein MutS.